The sequence spans 236 residues: Three prime repair exonuclease 2 (236 aa).

The Mg(2+) site is built by Asp-14 and Glu-16. Substrate-binding positions include 16–17 (EA) and Tyr-122. Catalysis depends on His-188, which acts as the Proton donor/acceptor. Asp-193 contributes to the Mg(2+) binding site. Residue Asp-193 participates in substrate binding.

Belongs to the exonuclease superfamily. TREX family. Homodimer. Requires Mg(2+) as cofactor.

It localises to the nucleus. The catalysed reaction is Exonucleolytic cleavage in the 3'- to 5'-direction to yield nucleoside 5'-phosphates.. Its function is as follows. Exonuclease with a preference for double-stranded DNA with mismatched 3' termini. May play a role in DNA repair. The sequence is that of Three prime repair exonuclease 2 (Trex2) from Mus musculus (Mouse).